The chain runs to 304 residues: Zinc carboxypeptidase (304 aa).

One can recognise a Peptidase M14 domain in the interval 1–294 (QYHTLPEIYS…DSVVTILKES (294 aa)). Residues His58 and Glu61 each contribute to the Zn(2+) site. Cys125 and Cys148 are joined by a disulfide. Position 184 (His184) interacts with Zn(2+). The Proton donor/acceptor role is filled by Glu259.

This sequence belongs to the peptidase M14 family. It depends on Zn(2+) as a cofactor. In terms of tissue distribution, gut specific.

It is found in the secreted. In terms of biological role, involved in the digestion of the blood meal. The sequence is that of Zinc carboxypeptidase from Simulium vittatum (Striped black fly).